Reading from the N-terminus, the 283-residue chain is Fructose-1,6-bisphosphatase class 1 (283 aa).

Glu67, Asp86, Leu88, and Asp89 together coordinate Mg(2+). Residues Asp89 to Ser92, Tyr195, and Lys225 contribute to the substrate site. Glu231 provides a ligand contact to Mg(2+).

Belongs to the FBPase class 1 family. In terms of assembly, homotetramer. The cofactor is Mg(2+).

Its subcellular location is the cytoplasm. The catalysed reaction is beta-D-fructose 1,6-bisphosphate + H2O = beta-D-fructose 6-phosphate + phosphate. It participates in carbohydrate biosynthesis; gluconeogenesis. The polypeptide is Fructose-1,6-bisphosphatase class 1 (Natronomonas pharaonis (strain ATCC 35678 / DSM 2160 / CIP 103997 / JCM 8858 / NBRC 14720 / NCIMB 2260 / Gabara) (Halobacterium pharaonis)).